Reading from the N-terminus, the 435-residue chain is Xylose isomerase (435 aa).

Residues His-100 and Asp-103 contribute to the active site. Glu-231, Glu-267, His-270, Asp-295, Asp-306, Asp-308, and Asp-338 together coordinate Mg(2+).

This sequence belongs to the xylose isomerase family. Homotetramer. Requires Mg(2+) as cofactor.

The protein resides in the cytoplasm. The catalysed reaction is alpha-D-xylose = alpha-D-xylulofuranose. This is Xylose isomerase from Brucella suis biovar 1 (strain 1330).